The primary structure comprises 163 residues: Neurotrophin-3 (163 aa).

Positions 1–3 are cleaved as a signal peptide; the sequence is IQS. Residues 4 to 119 constitute a propeptide that is removed on maturation; it reads TSMDQGILTE…VLNRTSRRKR (116 aa). Residue Asn112 is glycosylated (N-linked (GlcNAc...) asparagine). The disordered stretch occupies residues 113-133; it reads RTSRRKREGKSHRGEYSVCDS. The span at 123–133 shows a compositional bias: basic and acidic residues; sequence SHRGEYSVCDS.

The protein belongs to the NGF-beta family.

The protein resides in the secreted. Its function is as follows. Seems to promote the survival of visceral and proprioceptive sensory neurons. This is Neurotrophin-3 (NTF3) from Charina bottae (Northern rubber boa).